Consider the following 71-residue polypeptide: Large ribosomal subunit protein uL30 (71 aa).

The protein belongs to the universal ribosomal protein uL30 family. Part of the 50S ribosomal subunit.

In Mycobacterium leprae (strain TN), this protein is Large ribosomal subunit protein uL30.